The following is a 379-amino-acid chain: Zinc metalloproteinase nas-20 (379 aa).

The first 20 residues, 1–20 (MKITVNFLLVALIGVPSVLS), serve as a signal peptide directing secretion. Residues 21 to 29 (DRHITRDKR) constitute a propeptide that is removed on maturation. Positions 30 to 208 (QAMRDYAKWE…VLLNKFYGCN (179 aa)) constitute a Peptidase M12A domain. A glycan (N-linked (GlcNAc...) asparagine) is linked at Asn67. 4 cysteine pairs are disulfide-bonded: Cys70-Cys207, Cys91-Cys111, Cys209-Cys229, and Cys234-Cys243. His119 lines the Zn(2+) pocket. Glu120 is an active-site residue. 2 residues coordinate Zn(2+): His123 and His129. Residue Asn185 is glycosylated (N-linked (GlcNAc...) asparagine). Residues 203–244 (KFYGCNCDNHPRKLDCKNGGYQNPANCEECLCTDGFNGQLCD) form the EGF-like domain. 2 N-linked (GlcNAc...) asparagine glycosylation sites follow: Asn337 and Asn370.

Zn(2+) is required as a cofactor.

It localises to the secreted. Functionally, metalloprotease. The chain is Zinc metalloproteinase nas-20 (nas-20) from Caenorhabditis elegans.